A 572-amino-acid chain; its full sequence is Linalool synthase TPS2, chloroplastic (572 aa).

The transit peptide at 1 to 27 directs the protein to the chloroplast; that stretch reads EVEEPKTKISASTAEASSSRISSAKMT. The interval 1–45 is disordered; sequence EVEEPKTKISASTAEASSSRISSAKMTADGTIKLGDQSPLKQSEK. Over residues 8-28 the composition is skewed to low complexity; it reads KISASTAEASSSRISSAKMTA. (2E)-geranyl diphosphate-binding residues include Arg-284, Asp-321, Asp-325, Arg-462, and Asn-465. Residues Asp-321 and Asp-325 each coordinate Mg(2+). Positions 321–325 match the DDXXD motif motif; it reads DDVYD. Mg(2+) contacts are provided by Asn-465, Thr-469, and Ser-473.

The protein belongs to the terpene synthase family. Tpsb subfamily. As to quaternary structure, monomer. Requires Mg(2+) as cofactor. It depends on Mn(2+) as a cofactor. Expressed in flowers and fruits.

The protein resides in the plastid. The protein localises to the chloroplast. The enzyme catalyses (2E)-geranyl diphosphate = beta-myrcene + diphosphate. The catalysed reaction is (2E)-geranyl diphosphate + H2O = linalool + diphosphate. It catalyses the reaction (2E)-geranyl diphosphate = (Z)-beta-ocimene + diphosphate. It carries out the reaction (2E)-geranyl diphosphate = (E)-beta-ocimene + diphosphate. Its pathway is secondary metabolite biosynthesis; terpenoid biosynthesis. In terms of biological role, monoterpene synthase (mono-TPS) involved in the biosynthesis of monoterpenes natural products, constituent of coffee beverage aroma. Catalyzes the conversion of (2E)-geranyl diphosphate (GPP) into linalool and beta-myrcene, and, as minor products, cis-ocimene and trans-ocimene. Not able to use geranylgeranyl pyrophosphate (GGPP) and farnesyl pyrophosphate (FPP) as substrates. In Coffea arabica (Arabian coffee), this protein is Linalool synthase TPS2, chloroplastic.